Consider the following 149-residue polypeptide: Protein DOWN-REGULATED IN DIF1 11 (149 aa).

The N-terminal stretch at 1–22 (MEKAILITFLIATTSMVYQTIG) is a signal peptide.

As to expression, mostly expressed in embryo sac cells. Restricted to synergid cells, especially in the filiform apparatus of mature female gametophyte, via MYB98-mediated transcription regulation. Also detected at low levels in egg and central cells.

The polypeptide is Protein DOWN-REGULATED IN DIF1 11 (Arabidopsis thaliana (Mouse-ear cress)).